Consider the following 152-residue polypeptide: Transcriptional regulator MraZ (152 aa).

2 consecutive SpoVT-AbrB domains span residues 7-51 (KERH…APDR) and 89-132 (LEMV…DPQR).

Belongs to the MraZ family. In terms of assembly, forms oligomers.

It localises to the cytoplasm. It is found in the nucleoid. The sequence is that of Transcriptional regulator MraZ from Pelodictyon phaeoclathratiforme (strain DSM 5477 / BU-1).